The sequence spans 640 residues: Translation factor GUF1, mitochondrial (640 aa).

The N-terminal 26 residues, 1–26 (MRRLRSLYLQSSICFRRFNHYSAKDT), are a transit peptide targeting the mitochondrion. One can recognise a tr-type G domain in the interval 39–223 (ENYRNFSIVA…AIIDRIPPPT (185 aa)). GTP contacts are provided by residues 48 to 55 (AHVDHGKS), 115 to 119 (DTPGH), and 169 to 172 (NKID).

Belongs to the TRAFAC class translation factor GTPase superfamily. Classic translation factor GTPase family. LepA subfamily.

It localises to the mitochondrion inner membrane. The catalysed reaction is GTP + H2O = GDP + phosphate + H(+). Its function is as follows. Promotes mitochondrial protein synthesis. May act as a fidelity factor of the translation reaction, by catalyzing a one-codon backward translocation of tRNAs on improperly translocated ribosomes. Binds to mitochondrial ribosomes in a GTP-dependent manner. The protein is Translation factor GUF1, mitochondrial of Lachancea thermotolerans (strain ATCC 56472 / CBS 6340 / NRRL Y-8284) (Yeast).